The primary structure comprises 166 residues: Cyclic pyranopterin monophosphate synthase (166 aa).

Residues 83–85 and 121–122 each bind substrate; these read LCH and ME. Residue aspartate 136 is part of the active site.

The protein belongs to the MoaC family. In terms of assembly, homohexamer; trimer of dimers.

The enzyme catalyses (8S)-3',8-cyclo-7,8-dihydroguanosine 5'-triphosphate = cyclic pyranopterin phosphate + diphosphate. It functions in the pathway cofactor biosynthesis; molybdopterin biosynthesis. Catalyzes the conversion of (8S)-3',8-cyclo-7,8-dihydroguanosine 5'-triphosphate to cyclic pyranopterin monophosphate (cPMP). The protein is Cyclic pyranopterin monophosphate synthase of Syntrophobacter fumaroxidans (strain DSM 10017 / MPOB).